Here is a 258-residue protein sequence, read N- to C-terminus: Type III pantothenate kinase (258 aa).

6 to 13 (DVGNTNIV) serves as a coordination point for ATP. Residues Tyr100 and 107–110 (GADR) each bind substrate. Catalysis depends on Asp109, which acts as the Proton acceptor. Asp129 contributes to the K(+) binding site. Thr132 lines the ATP pocket. Thr184 serves as a coordination point for substrate.

This sequence belongs to the type III pantothenate kinase family. In terms of assembly, homodimer. The cofactor is NH4(+). K(+) is required as a cofactor.

It is found in the cytoplasm. It carries out the reaction (R)-pantothenate + ATP = (R)-4'-phosphopantothenate + ADP + H(+). It participates in cofactor biosynthesis; coenzyme A biosynthesis; CoA from (R)-pantothenate: step 1/5. In terms of biological role, catalyzes the phosphorylation of pantothenate (Pan), the first step in CoA biosynthesis. The protein is Type III pantothenate kinase of Clostridium botulinum (strain Kyoto / Type A2).